The sequence spans 215 residues: 3-isopropylmalate dehydratase small subunit (215 aa).

The protein belongs to the LeuD family. LeuD type 1 subfamily. Heterodimer of LeuC and LeuD.

It catalyses the reaction (2R,3S)-3-isopropylmalate = (2S)-2-isopropylmalate. Its pathway is amino-acid biosynthesis; L-leucine biosynthesis; L-leucine from 3-methyl-2-oxobutanoate: step 2/4. Functionally, catalyzes the isomerization between 2-isopropylmalate and 3-isopropylmalate, via the formation of 2-isopropylmaleate. The chain is 3-isopropylmalate dehydratase small subunit from Cellvibrio japonicus (strain Ueda107) (Pseudomonas fluorescens subsp. cellulosa).